A 120-amino-acid polypeptide reads, in one-letter code: C-C motif chemokine 16 (120 aa).

The N-terminal stretch at 1-23 (MKVSEAALSLLVLILIITSASRS) is a signal peptide. Intrachain disulfides connect Cys-37-Cys-60 and Cys-38-Cys-76.

Belongs to the intercrine beta (chemokine CC) family. In terms of tissue distribution, mainly expressed in liver, also found in spleen and thymus. Highly expressed in LPS- and IFN-gamma-activated monocytes, weakly in some lymphocytes, including natural killer cells, gamma-delta T-cells, and some T-cell clones.

It localises to the secreted. Shows chemotactic activity for lymphocytes and monocytes but not neutrophils. Also shows potent myelosuppressive activity, suppresses proliferation of myeloid progenitor cells. Recombinant SCYA16 shows chemotactic activity for monocytes and THP-1 monocytes, but not for resting lymphocytes and neutrophils. Induces a calcium flux in THP-1 cells that were desensitized by prior expression to RANTES. The protein is C-C motif chemokine 16 (CCL16) of Homo sapiens (Human).